Consider the following 223-residue polypeptide: Probable 3-beta-hydroxysteroid-Delta(8),Delta(7)-isomerase (223 aa).

4 consecutive transmembrane segments (helical) span residues 28–48 (IVSI…LLFG), 58–78 (LMCW…YFVF), 115–135 (VEGI…YAIA), and 175–195 (FYYY…PSLI). In terms of domain architecture, EXPERA spans 54–196 (LDKLLMCWWT…WWVLIPSLIS (143 aa)).

This sequence belongs to the EBP family.

The protein resides in the endoplasmic reticulum membrane. It carries out the reaction lathosterol = 5alpha-cholest-8-en-3beta-ol. It functions in the pathway steroid biosynthesis; sterol biosynthesis. Catalyzes the conversion of Delta(8)-sterols to their corresponding Delta(7)-isomers. The chain is Probable 3-beta-hydroxysteroid-Delta(8),Delta(7)-isomerase from Arabidopsis thaliana (Mouse-ear cress).